A 360-amino-acid polypeptide reads, in one-letter code: (+)-6a-hydroxymaackiain 3-O-methyltransferase 2 (360 aa).

S-adenosyl-L-methionine is bound by residues 202-205 (VAGG), D226, 226-227 (DQ), 246-247 (DM), and K260. H264 acts as the Proton acceptor in catalysis.

The protein belongs to the class I-like SAM-binding methyltransferase superfamily. Cation-independent O-methyltransferase family. COMT subfamily.

The catalysed reaction is (+)-6a-hydroxymaackiain + S-adenosyl-L-methionine = (+)-pisatin + S-adenosyl-L-homocysteine + H(+). 3-O-methyltransferase involved in the phytoalexin pisatin biosynthesis. Can use (+)-6a-hydroxymaackiain, (+)-maackiain and with a lower activity (+)-medicarpin and 2,7,4'-trihydroxyisoflavanone as substrates, but not (-)-6a-hydroxymaackiain, daidzein, formononetin or isoliquiritigenin. This chain is (+)-6a-hydroxymaackiain 3-O-methyltransferase 2 (HMM2), found in Pisum sativum (Garden pea).